The following is a 372-amino-acid chain: DNA-directed RNA polymerase subunit alpha (372 aa).

The interval 1-268 (MIFDEDSNSI…DQFQPFINFD (268 aa)) is alpha N-terminal domain (alpha-NTD). The interval 280–372 (KDTLPYDSNL…ESLSKQYSEE (93 aa)) is alpha C-terminal domain (alpha-CTD).

It belongs to the RNA polymerase alpha chain family. Homodimer. The RNAP catalytic core consists of 2 alpha, 1 beta, 1 beta' and 1 omega subunit. When a sigma factor is associated with the core the holoenzyme is formed, which can initiate transcription.

The catalysed reaction is RNA(n) + a ribonucleoside 5'-triphosphate = RNA(n+1) + diphosphate. Functionally, DNA-dependent RNA polymerase catalyzes the transcription of DNA into RNA using the four ribonucleoside triphosphates as substrates. The protein is DNA-directed RNA polymerase subunit alpha of Ehrlichia chaffeensis (strain ATCC CRL-10679 / Arkansas).